Reading from the N-terminus, the 379-residue chain is Heme chaperone HemW (379 aa).

The Radical SAM core domain occupies Met1–Asn232. Tyr9 contacts S-adenosyl-L-methionine. Residues Cys15, Cys19, and Cys22 each contribute to the [4Fe-4S] cluster site. Residues Gly60, Gly61 to Thr62, Glu93, Gln120, Arg132, and Asp157 contribute to the S-adenosyl-L-methionine site.

The protein belongs to the anaerobic coproporphyrinogen-III oxidase family. HemW subfamily. In terms of assembly, homodimer.

The protein resides in the cytoplasm. It localises to the cell membrane. Could serve in the delivery of heme to a membrane-localized target protein. Binds one molecule of heme per monomer, possibly covalently; heme and Fe-S cluster binding are independent. Incubation with the reductant sodium dithionite increases binding. Does not have coproporphyrinogen III dehydrogenase activity in vitro, does not complement an E.coli hemN deletion in vivo. Binds 1 Fe-S cluster, it is probably [4Fe-4S]. The cluster is coordinated with 3 cysteines and an exchangeable S-adenosyl-L-methionine; only dimeric protein has the cluster. The sequence is that of Heme chaperone HemW from Lactococcus lactis subsp. lactis (strain IL1403) (Streptococcus lactis).